A 981-amino-acid polypeptide reads, in one-letter code: GPI ethanolamine phosphate transferase 1 (981 aa).

Residues 1 to 6 lie on the Cytoplasmic side of the membrane; that stretch reads MAGSSR. Residues 7-27 traverse the membrane as a helical segment; the sequence is IGFMAIAVAFHLVYILSIFDI. At 28 to 464 the chain is on the lumenal side; it reads YFVSPIVTGM…LQTYDWLFLR (437 aa). Residues asparagine 148, asparagine 211, and asparagine 295 are each glycosylated (N-linked (GlcNAc...) asparagine). Residues 465–485 traverse the membrane as a helical segment; sequence ALITIGYLGWMAYATTTVLSL. At 486 to 496 the chain is on the cytoplasmic side; it reads YVVKESMSPQR. A helical membrane pass occupies residues 497 to 517; it reads TLLGSAFFLSLLVALYSSFII. At 518-519 the chain is on the lumenal side; that stretch reads SK. A helical membrane pass occupies residues 520–540; the sequence is SPPAYYLYAFFPVLFWEEVYA. Residues 541-560 are Cytoplasmic-facing; it reads RRANVAKGFQALFGHVKSGG. A helical transmembrane segment spans residues 561–581; it reads AVVALVFNVVLYLGVIQSLAL. Over 582–587 the chain is Lumenal; that stretch reads AYIHRE. The chain crosses the membrane as a helical span at residues 588–608; the sequence is ILTGLFVLGAFWPMTQGISFL. Topologically, residues 609–611 are cytoplasmic; it reads RSH. The helical transmembrane segment at 612 to 632 threads the bilayer; that stretch reads LFLSMLWFFSCLAMSTFTLLP. Over 633–638 the chain is Lumenal; the sequence is AMKVED. A helical transmembrane segment spans residues 639–659; the sequence is IPLIMAGGGLMTFVGLAYLVL. Over 660–681 the chain is Cytoplasmic; sequence EDFILSDVSSSKTKLKRLHTSR. The chain crosses the membrane as a helical span at residues 682–702; it reads TLLGIQVGLIILAMLVTHSSA. At 703–708 the chain is on the lumenal side; sequence TSLQAK. The chain crosses the membrane as a helical span at residues 709-729; it reads LGLPKGNQIVGWFVLVTSLLM. The Cytoplasmic portion of the chain corresponds to 730–744; it reads PLAYRLQPNSHYMHR. A helical transmembrane segment spans residues 745–767; that stretch reads LAIIFLTCAPTFVILTISYEGLF. The Lumenal portion of the chain corresponds to 768–819; it reads YVAFSITLLSWVRLEYAVDAFTQEKAKKQATVAGSQQHTPSTFRPLSLSDAR. Residues 820–840 traverse the membrane as a helical segment; the sequence is IALFFMVLLQSAFFSTGNIAS. Over 841–862 the chain is Cytoplasmic; that stretch reads ISSFSLESVSRLIPVFDPFSQG. A helical transmembrane segment spans residues 863–883; the sequence is ALLILKIIIPFFLISANLGVL. Residues 884–892 are Lumenal-facing; the sequence is NKRLGVAPS. Residues 893–913 traverse the membrane as a helical segment; the sequence is AIFMVVLTASDVLTLYFFWVV. Topologically, residues 914 to 929 are cytoplasmic; sequence KDEGSWLEIGSTITHF. Residues 930-950 form a helical membrane-spanning segment; the sequence is AIASFLCVFVAALEFVSAAFI. Residues 951–981 lie on the Lumenal side of the membrane; the sequence is AGIEVEDTKSAALTSASTKADEKVPPVAGAE.

Belongs to the PIGG/PIGN/PIGO family. PIGN subfamily.

The protein localises to the endoplasmic reticulum membrane. The protein operates within glycolipid biosynthesis; glycosylphosphatidylinositol-anchor biosynthesis. Functionally, ethanolamine phosphate transferase involved in glycosylphosphatidylinositol-anchor biosynthesis. Transfers ethanolamine phosphate to the first alpha-1,4-linked mannose of the glycosylphosphatidylinositol precursor of GPI-anchor. The protein is GPI ethanolamine phosphate transferase 1 (MCD4) of Gibberella zeae (strain ATCC MYA-4620 / CBS 123657 / FGSC 9075 / NRRL 31084 / PH-1) (Wheat head blight fungus).